Reading from the N-terminus, the 497-residue chain is Glycerol kinase (497 aa).

ADP is bound at residue Thr-11. 3 residues coordinate ATP: Thr-11, Ser-12, and Ser-13. Position 11 (Thr-11) interacts with sn-glycerol 3-phosphate. Arg-15 contributes to the ADP binding site. Residues Arg-81, Glu-82, Tyr-133, and Asp-242 each contribute to the sn-glycerol 3-phosphate site. Positions 81, 82, 133, 242, and 243 each coordinate glycerol. ADP-binding residues include Thr-264 and Gly-307. ATP contacts are provided by Thr-264, Gly-307, Gln-311, and Gly-412. Residues Gly-412 and Asn-416 each coordinate ADP.

This sequence belongs to the FGGY kinase family.

The catalysed reaction is glycerol + ATP = sn-glycerol 3-phosphate + ADP + H(+). Its pathway is polyol metabolism; glycerol degradation via glycerol kinase pathway; sn-glycerol 3-phosphate from glycerol: step 1/1. With respect to regulation, inhibited by fructose 1,6-bisphosphate (FBP). Its function is as follows. Key enzyme in the regulation of glycerol uptake and metabolism. Catalyzes the phosphorylation of glycerol to yield sn-glycerol 3-phosphate. This is Glycerol kinase from Polaromonas sp. (strain JS666 / ATCC BAA-500).